The sequence spans 404 residues: tRNA pseudouridine synthase D (404 aa).

The active-site Nucleophile is the aspartate 79. The TRUD domain occupies 154–364 (GVPNRFGEQR…MEGERRPLRV (211 aa)).

The protein belongs to the pseudouridine synthase TruD family.

It catalyses the reaction uridine(13) in tRNA = pseudouridine(13) in tRNA. In terms of biological role, responsible for synthesis of pseudouridine from uracil-13 in transfer RNAs. In Geobacter metallireducens (strain ATCC 53774 / DSM 7210 / GS-15), this protein is tRNA pseudouridine synthase D.